Reading from the N-terminus, the 89-residue chain is UPF0335 protein Caul_0876 (89 aa).

The protein belongs to the UPF0335 family.

The polypeptide is UPF0335 protein Caul_0876 (Caulobacter sp. (strain K31)).